The following is a 76-amino-acid chain: Alpha/kappa-conotoxin pl14a (76 aa).

A signal peptide spans 1–24; that stretch reads MPSVRSVTCCCLLWMMFSVQLVTP. The propeptide occupies 25–39; the sequence is GSPGTAQLSGHRTAR. Cystine bridges form between Cys-46/Cys-61 and Cys-50/Cys-63. Arg-64 carries the arginine amide modification. Residues 65 to 76 constitute a propeptide that is removed on maturation; the sequence is GKRDAVSSSMAV.

The protein belongs to the conotoxin J superfamily. Expressed by the venom duct.

It localises to the secreted. In terms of biological role, highly inhibits both nicotinic acetylcholine receptors (neuronal (IC(50)=8.7 uM for alpha-3/beta-4) and muscular (IC(50)=0.54 uM for alpha-1-beta-1-epsilon-delta (CHRNA1-CHRNB1-CHRND-CHRNE)) subtypes) and the voltage-gated potassium channel Kv1.6/KCNA6 subtype (IC(50)=1.59 uM). The chain is Alpha/kappa-conotoxin pl14a from Conus planorbis (Planorbis cone).